We begin with the raw amino-acid sequence, 1543 residues long: Rho guanine nucleotide exchange factor 12 (1543 aa).

Positions 1 to 62 (MSGTQSTITD…KTKSSSEESR (62 aa)) are disordered. Position 2 is an N-acetylserine (Ser-2). The segment covering 28–45 (SPTDKKQKVERSSSHDFD) has biased composition (basic and acidic residues). Ser-41 carries the phosphoserine modification. The PDZ domain occupies 72–151 (CVIIQKDDNG…LTVQGRPPGS (80 aa)). Residues 194–262 (VGEENNVVHN…LSKATGSAQD (69 aa)) are a coiled coil. The disordered stretch occupies residues 281–355 (AEADPGDGLC…GAPHIIGAED (75 aa)). Over residues 293–312 (DWSSGDASRPSSDSADSPKS) the composition is skewed to low complexity. Ser-309 is modified (phosphoserine). The span at 313 to 329 (SLRERSYLEEAPERSEG) shows a compositional bias: basic and acidic residues. Ser-341 carries the post-translational modification Phosphoserine. In terms of domain architecture, RGSL spans 367-558 (GQCSCFQSIE…LMYMKYLGVK (192 aa)). Positions 574–710 (FLPKIKQSMK…DSTPRVPTTV (137 aa)) are disordered. The segment covering 582–592 (MKKDREGEEKG) has biased composition (basic and acidic residues). Position 637 is a phosphoserine (Ser-637). Over residues 663–676 (ASSMSSATSGTALS) the composition is skewed to low complexity. The residue at position 736 (Thr-736) is a Phosphothreonine. A DH domain is found at 787 to 977 (KRQEVINELF…RQILNYVNQA (191 aa)). A coiled-coil region spans residues 981–1004 (AENKQRLEDYQRRLDTSNLKLSEY). In terms of domain architecture, PH spans 1019 to 1132 (KMIHEGPLVW…WQDLICRMAA (114 aa)). Residues 1137–1158 (QSTKPIPLPQPPPCEGDNDEEE) form a disordered region. Ser-1288, Ser-1327, and Ser-1377 each carry phosphoserine. 2 disordered regions span residues 1386 to 1405 (EAHS…KEEK) and 1441 to 1468 (PVTG…GPVS). Residues 1450–1460 (SSHQQQHSPQN) are compositionally biased toward polar residues. 2 positions are modified to phosphoserine: Ser-1457 and Ser-1540.

Interacts with GNA12 and GNA13, probably through the RGS-like domain, with RHOA, PLXNB1 and PLXNB2, and through its PDZ domain with IGF1R beta subunit. Interacts with GCSAM. Found in a complex with ARHGEF11 and ARHGEF12; binding to ARHGEF11 and ARHGEF12 enhances CDC42 GEF activity of PLEKHG4B, and PLEKHG4B, in turn, inhibits ARHGEF11- and ARHGEF12-mediated RHOA activation. Expressed in brain, predominantly in neuronal cell bodies.

It is found in the cytoplasm. The protein localises to the membrane. May play a role in the regulation of RhoA GTPase by guanine nucleotide-binding alpha-12 (GNA12) and alpha-13 (GNA13). Acts as guanine nucleotide exchange factor (GEF) for RhoA GTPase and may act as GTPase-activating protein (GAP) for GNA12 and GNA13. This is Rho guanine nucleotide exchange factor 12 (Arhgef12) from Mus musculus (Mouse).